The sequence spans 581 residues: Protein GAMETOPHYTE DEFECTIVE 1 (581 aa).

The span at 452–467 (SMNIESTSEGGSMSPS) shows a compositional bias: polar residues. Residues 452–512 (SMNIESTSEG…TTGHASNDEM (61 aa)) form a disordered region. Positions 496 to 512 (ENSKERATTGHASNDEM) are enriched in basic and acidic residues.

The protein belongs to the eukaryotic/archaeal RNase P protein component 3 family. In terms of assembly, probable component of nuclear RNase P and RNase MRP ribonucleoproteins. Interacts with POP5. In terms of tissue distribution, mostly expressed in inflorescence and roots, to a lower extent in leaves, and, at low levels, in siliques, seedlings and stems.

The protein resides in the nucleus. It is found in the nucleolus. It localises to the mitochondrion. Functionally, probable component of ribonuclease P, a ribonucleoprotein complex that generates mature tRNA molecules by cleaving their 5'-ends. May also be a component of the MRP ribonuclease complex, which cleaves pre-rRNA sequences. Required for female gametophyte development and male competence. This is Protein GAMETOPHYTE DEFECTIVE 1 from Arabidopsis thaliana (Mouse-ear cress).